The following is a 699-amino-acid chain: Polyribonucleotide nucleotidyltransferase (699 aa).

Mg(2+) is bound by residues Asp-487 and Asp-493. A KH domain is found at 554-613; that stretch reads PRMLNMKINPEKIRDVIGKGGAVIRALQEETGTVIEIEDDGSITISSVSAEGAQKAKARI. An S1 motif domain is found at 623–691; that stretch reads GKVYEGTVVR…ERGKIRLSMK (69 aa).

Belongs to the polyribonucleotide nucleotidyltransferase family. Mg(2+) is required as a cofactor.

The protein resides in the cytoplasm. It catalyses the reaction RNA(n+1) + phosphate = RNA(n) + a ribonucleoside 5'-diphosphate. Functionally, involved in mRNA degradation. Catalyzes the phosphorolysis of single-stranded polyribonucleotides processively in the 3'- to 5'-direction. The protein is Polyribonucleotide nucleotidyltransferase of Azoarcus sp. (strain BH72).